The following is a 120-amino-acid chain: Large ribosomal subunit protein uL18c (120 aa).

The protein belongs to the universal ribosomal protein uL18 family. As to quaternary structure, part of the 50S ribosomal subunit; contacts the 5S rRNA.

Its subcellular location is the plastid. The protein localises to the chloroplast. Functionally, binds 5S rRNA, forms part of the central protuberance of the 50S subunit. This Pyropia yezoensis (Susabi-nori) protein is Large ribosomal subunit protein uL18c (rpl18).